The chain runs to 273 residues: F-actin-capping protein subunit alpha (273 aa).

It belongs to the F-actin-capping protein alpha subunit family. As to quaternary structure, heterodimer of an alpha and a beta subunit.

The protein resides in the cytoplasm. Its subcellular location is the cytoskeleton. In terms of biological role, F-actin-capping proteins bind in a Ca(2+)-independent manner to the fast growing ends of actin filaments (barbed end) thereby blocking the exchange of subunits at these ends. Unlike other capping proteins (such as gelsolin and severin), these proteins do not sever actin filaments. The chain is F-actin-capping protein subunit alpha (CAP1) from Gibberella zeae (strain ATCC MYA-4620 / CBS 123657 / FGSC 9075 / NRRL 31084 / PH-1) (Wheat head blight fungus).